Here is a 277-residue protein sequence, read N- to C-terminus: Shikimate dehydrogenase (NADP(+)) (277 aa).

Shikimate contacts are provided by residues 15 to 17 (SLS) and threonine 62. The active-site Proton acceptor is the lysine 66. Shikimate-binding residues include asparagine 87 and aspartate 102. Residues 127 to 131 (GSGGA), 151 to 156 (NRTVDK), and isoleucine 219 contribute to the NADP(+) site. Tyrosine 221 is a binding site for shikimate. An NADP(+)-binding site is contributed by glycine 242.

It belongs to the shikimate dehydrogenase family. Homodimer.

It carries out the reaction shikimate + NADP(+) = 3-dehydroshikimate + NADPH + H(+). The protein operates within metabolic intermediate biosynthesis; chorismate biosynthesis; chorismate from D-erythrose 4-phosphate and phosphoenolpyruvate: step 4/7. Functionally, involved in the biosynthesis of the chorismate, which leads to the biosynthesis of aromatic amino acids. Catalyzes the reversible NADPH linked reduction of 3-dehydroshikimate (DHSA) to yield shikimate (SA). This Bacillus cereus (strain B4264) protein is Shikimate dehydrogenase (NADP(+)).